Reading from the N-terminus, the 62-residue chain is UPF0434 protein NGR_c31900 (62 aa).

It belongs to the UPF0434 family.

The chain is UPF0434 protein NGR_c31900 from Sinorhizobium fredii (strain NBRC 101917 / NGR234).